The sequence spans 213 residues: ATP synthase peripheral stalk subunit OSCP, mitochondrial (213 aa).

A mitochondrion-targeting transit peptide spans 1-23 (MAAPAVSGVSQQVRYFGTSVVRP). Residues 5-23 (AVSGVSQQVRYFGTSVVRP) carry the SIFI-degron motif. N6-acetyllysine is present on residues Lys-54, Lys-60, Lys-70, and Lys-73. Residue Lys-90 is modified to N6-succinyllysine. N6-acetyllysine; alternate occurs at positions 158 and 162. An N6-succinyllysine; alternate mark is found at Lys-158 and Lys-162. N6-acetyllysine occurs at positions 172, 176, and 192. An N6-succinyllysine modification is found at Lys-199.

Belongs to the ATPase delta chain family. In terms of assembly, component of the ATP synthase complex composed at least of ATP5F1A/subunit alpha, ATP5F1B/subunit beta, ATP5MC1/subunit c (homooctomer), MT-ATP6/subunit a, MT-ATP8/subunit 8, ATP5ME/subunit e, ATP5MF/subunit f, ATP5MG/subunit g, ATP5MK/subunit k, ATP5MJ/subunit j, ATP5F1C/subunit gamma, ATP5F1D/subunit delta, ATP5F1E/subunit epsilon, ATP5PF/subunit F6, ATP5PB/subunit b, ATP5PD/subunit d, ATP5PO/subunit OSCP. ATP synthase complex consists of a soluble F(1) head domain (subunits alpha(3) and beta(3)) - the catalytic core - and a membrane F(0) domain - the membrane proton channel (subunits c, a, 8, e, f, g, k and j). These two domains are linked by a central stalk (subunits gamma, delta, and epsilon) rotating inside the F1 region and a stationary peripheral stalk (subunits F6, b, d, and OSCP). Post-translationally, acetylation at Lys-162 decreases ATP production. Deacetylated by SIRT3. In response to mitochondrial stress, the precursor protein is ubiquitinated by the SIFI complex in the cytoplasm before mitochondrial import, leading to its degradation. Within the SIFI complex, UBR4 initiates ubiquitin chain that are further elongated or branched by KCMF1.

It localises to the mitochondrion. The protein resides in the mitochondrion inner membrane. Functionally, subunit OSCP, of the mitochondrial membrane ATP synthase complex (F(1)F(0) ATP synthase or Complex V) that produces ATP from ADP in the presence of a proton gradient across the membrane which is generated by electron transport complexes of the respiratory chain. ATP synthase complex consist of a soluble F(1) head domain - the catalytic core - and a membrane F(1) domain - the membrane proton channel. These two domains are linked by a central stalk rotating inside the F(1) region and a stationary peripheral stalk. During catalysis, ATP synthesis in the catalytic domain of F(1) is coupled via a rotary mechanism of the central stalk subunits to proton translocation. In vivo, can only synthesize ATP although its ATP hydrolase activity can be activated artificially in vitro. Part of the complex F(0) domain. Part of the complex F(0) domain and the peripheric stalk, which acts as a stator to hold the catalytic alpha(3)beta(3) subcomplex and subunit a/ATP6 static relative to the rotary elements. The chain is ATP synthase peripheral stalk subunit OSCP, mitochondrial from Callithrix jacchus (White-tufted-ear marmoset).